We begin with the raw amino-acid sequence, 325 residues long: GMP reductase (325 aa).

The active-site Thioimidate intermediate is the Cys-174. An NADP(+)-binding site is contributed by 203–226; that stretch reads LIADGGIRTHGDIAKSIRFGASMV.

The protein belongs to the IMPDH/GMPR family. GuaC type 2 subfamily.

The catalysed reaction is IMP + NH4(+) + NADP(+) = GMP + NADPH + 2 H(+). Functionally, catalyzes the irreversible NADPH-dependent deamination of GMP to IMP. It functions in the conversion of nucleobase, nucleoside and nucleotide derivatives of G to A nucleotides, and in maintaining the intracellular balance of A and G nucleotides. The sequence is that of GMP reductase from Staphylococcus aureus (strain NCTC 8325 / PS 47).